The primary structure comprises 473 residues: Adenosylhomocysteinase (473 aa).

Thr64, Asp139, and Glu199 together coordinate substrate. 200-202 contributes to the NAD(+) binding site; it reads TTT. Substrate is bound by residues Lys229 and Asp233. NAD(+)-binding positions include Asn234, 263-268, Glu286, Asn321, 342-344, and Asn387; these read GYGDVG and IGH.

This sequence belongs to the adenosylhomocysteinase family. The cofactor is NAD(+).

Its subcellular location is the cytoplasm. It carries out the reaction S-adenosyl-L-homocysteine + H2O = L-homocysteine + adenosine. Its pathway is amino-acid biosynthesis; L-homocysteine biosynthesis; L-homocysteine from S-adenosyl-L-homocysteine: step 1/1. Functionally, may play a key role in the regulation of the intracellular concentration of adenosylhomocysteine. This chain is Adenosylhomocysteinase, found in Paraburkholderia xenovorans (strain LB400).